Here is a 47-residue protein sequence, read N- to C-terminus: Large ribosomal subunit protein eL40 (47 aa).

Belongs to the eukaryotic ribosomal protein eL40 family.

This Methanococcus vannielii (strain ATCC 35089 / DSM 1224 / JCM 13029 / OCM 148 / SB) protein is Large ribosomal subunit protein eL40.